We begin with the raw amino-acid sequence, 324 residues long: Ribose-phosphate pyrophosphokinase (324 aa).

ATP is bound by residues 45–47 (NGE) and 104–105 (RQ). Positions 138 and 178 each coordinate Mg(2+). Lysine 201 is a catalytic residue. D-ribose 5-phosphate is bound by residues arginine 203, aspartate 229, and 233-237 (DTGGT).

Belongs to the ribose-phosphate pyrophosphokinase family. Class I subfamily. As to quaternary structure, homohexamer. The cofactor is Mg(2+).

Its subcellular location is the cytoplasm. The catalysed reaction is D-ribose 5-phosphate + ATP = 5-phospho-alpha-D-ribose 1-diphosphate + AMP + H(+). It participates in metabolic intermediate biosynthesis; 5-phospho-alpha-D-ribose 1-diphosphate biosynthesis; 5-phospho-alpha-D-ribose 1-diphosphate from D-ribose 5-phosphate (route I): step 1/1. In terms of biological role, involved in the biosynthesis of the central metabolite phospho-alpha-D-ribosyl-1-pyrophosphate (PRPP) via the transfer of pyrophosphoryl group from ATP to 1-hydroxyl of ribose-5-phosphate (Rib-5-P). This is Ribose-phosphate pyrophosphokinase from Streptomyces coelicolor (strain ATCC BAA-471 / A3(2) / M145).